A 127-amino-acid polypeptide reads, in one-letter code: Small ribosomal subunit protein uS13 (127 aa).

The tract at residues 97–127 is disordered; sequence PVRGQRTRTNARTRRGRRVTVAGKKKAPSKK. The segment covering 101–127 has biased composition (basic residues); it reads QRTRTNARTRRGRRVTVAGKKKAPSKK.

It belongs to the universal ribosomal protein uS13 family. In terms of assembly, part of the 30S ribosomal subunit. Forms a loose heterodimer with protein S19. Forms two bridges to the 50S subunit in the 70S ribosome.

Its function is as follows. Located at the top of the head of the 30S subunit, it contacts several helices of the 16S rRNA. In the 70S ribosome it contacts the 23S rRNA (bridge B1a) and protein L5 of the 50S subunit (bridge B1b), connecting the 2 subunits; these bridges are implicated in subunit movement. Contacts the tRNAs in the A and P-sites. This chain is Small ribosomal subunit protein uS13, found in Microcystis aeruginosa (strain NIES-843 / IAM M-2473).